A 344-amino-acid polypeptide reads, in one-letter code: tRNA dimethylallyltransferase (344 aa).

ATP is bound at residue 19-26 (GPTASGKT). 21–26 (TASGKT) provides a ligand contact to substrate.

Belongs to the IPP transferase family. As to quaternary structure, monomer. Mg(2+) serves as cofactor.

It catalyses the reaction adenosine(37) in tRNA + dimethylallyl diphosphate = N(6)-dimethylallyladenosine(37) in tRNA + diphosphate. Its function is as follows. Catalyzes the transfer of a dimethylallyl group onto the adenine at position 37 in tRNAs that read codons beginning with uridine, leading to the formation of N6-(dimethylallyl)adenosine (i(6)A). In Bifidobacterium animalis subsp. lactis (strain AD011), this protein is tRNA dimethylallyltransferase.